The sequence spans 249 residues: Chromosome segregation and cytokinesis defective protein 1 (249 aa).

Residues 12–48 are a coiled coil; the sequence is VVAMADTLETRVKDLLEEYKKKLREVALQTAKAESDR. 3 disordered regions span residues 70 to 89, 94 to 183, and 208 to 249; these read PDDFYIESGEEEEEGEAAVA, LPSE…PEKP, and TTAT…GTSV. Acidic residues predominate over residues 73-85; the sequence is FYIESGEEEEEGE. Positions 109-126 are enriched in polar residues; the sequence is QKTSIPIGQNSGRNTVQV. The segment covering 224 to 236 has biased composition (low complexity); it reads SGAASKKAAAAAG.

This sequence belongs to the borealin family. Highly divergent. In terms of assembly, component of the CPC complex which consists of icp-1; csc-1; bir-1 and air-2. Within the complex interacts with Aurora B/air-2, bir-1 and icp-1.

The protein localises to the nucleus. The protein resides in the chromosome. It localises to the centromere. Its subcellular location is the cytoplasm. It is found in the cytoskeleton. The protein localises to the spindle. Its function is as follows. Component of the chromosomal passenger complex (CPC), a complex that acts as a key regulator of chromosome segregation and cytokinesis during mitosis. The CPC complex has essential functions at the centromere in ensuring correct chromosome alignment and segregation. In the complex, it may be required to direct the Aurora B/air-2 to centromeric DNA. The chain is Chromosome segregation and cytokinesis defective protein 1 (csc-1) from Caenorhabditis elegans.